A 161-amino-acid chain; its full sequence is Peptidyl-prolyl cis-trans isomerase-like 1 (161 aa).

Residues 1–155 (MATDVAFDTS…DEVKIIRARV (155 aa)) form the PPIase cyclophilin-type domain.

It belongs to the cyclophilin-type PPIase family. PPIL1 subfamily.

The catalysed reaction is [protein]-peptidylproline (omega=180) = [protein]-peptidylproline (omega=0). Its function is as follows. PPIases accelerate the folding of proteins. It catalyzes the cis-trans isomerization of proline imidic peptide bonds in oligopeptides. This is Peptidyl-prolyl cis-trans isomerase-like 1 (cyp1) from Aspergillus oryzae (strain ATCC 42149 / RIB 40) (Yellow koji mold).